The chain runs to 135 residues: MIYLETSALVKLIRIEVESDALADWLDDRTELRWITSALTEVELSRAIRAVSPEGLPAVPSVLARLDRFEIDAVIRSTAAAYPNPALRSLDAIHLATAQTAGSVAPLTALVTYDNRLKEAAEALSLAVVAPGQAR.

Positions 2–123 (IYLETSALVK…DNRLKEAAEA (122 aa)) constitute a PINc domain. Positions 5 and 91 each coordinate Mg(2+).

Belongs to the PINc/VapC protein family. The cofactor is Mg(2+).

In terms of biological role, toxic component of a type II toxin-antitoxin (TA) system. An RNase. Its toxic effect is neutralized by coexpression with cognate antitoxin VapB35. This is Ribonuclease VapC35 from Mycobacterium tuberculosis (strain CDC 1551 / Oshkosh).